Here is an 86-residue protein sequence, read N- to C-terminus: Large ribosomal subunit protein bL27 (86 aa).

The protein belongs to the bacterial ribosomal protein bL27 family.

This is Large ribosomal subunit protein bL27 from Koribacter versatilis (strain Ellin345).